Consider the following 245-residue polypeptide: Orotidine 5'-phosphate decarboxylase (245 aa).

Substrate contacts are provided by residues Asp-22, Lys-44, 71–80, Thr-131, Arg-192, Gln-201, Gly-221, and Arg-222; that span reads DLKFHDIPNT. Lys-73 serves as the catalytic Proton donor.

This sequence belongs to the OMP decarboxylase family. Type 1 subfamily. As to quaternary structure, homodimer.

The enzyme catalyses orotidine 5'-phosphate + H(+) = UMP + CO2. The protein operates within pyrimidine metabolism; UMP biosynthesis via de novo pathway; UMP from orotate: step 2/2. In terms of biological role, catalyzes the decarboxylation of orotidine 5'-monophosphate (OMP) to uridine 5'-monophosphate (UMP). This Escherichia coli O6:K15:H31 (strain 536 / UPEC) protein is Orotidine 5'-phosphate decarboxylase.